A 360-amino-acid polypeptide reads, in one-letter code: UDP-N-acetylglucosamine--N-acetylmuramyl-(pentapeptide) pyrophosphoryl-undecaprenol N-acetylglucosamine transferase (360 aa).

Residues 12-14, S198, and Q289 contribute to the UDP-N-acetyl-alpha-D-glucosamine site; that span reads TAG.

It belongs to the glycosyltransferase 28 family. MurG subfamily.

It is found in the cell membrane. It catalyses the reaction Mur2Ac(oyl-L-Ala-gamma-D-Glu-L-Lys-D-Ala-D-Ala)-di-trans,octa-cis-undecaprenyl diphosphate + UDP-N-acetyl-alpha-D-glucosamine = beta-D-GlcNAc-(1-&gt;4)-Mur2Ac(oyl-L-Ala-gamma-D-Glu-L-Lys-D-Ala-D-Ala)-di-trans,octa-cis-undecaprenyl diphosphate + UDP + H(+). Its pathway is cell wall biogenesis; peptidoglycan biosynthesis. Functionally, cell wall formation. Catalyzes the transfer of a GlcNAc subunit on undecaprenyl-pyrophosphoryl-MurNAc-pentapeptide (lipid intermediate I) to form undecaprenyl-pyrophosphoryl-MurNAc-(pentapeptide)GlcNAc (lipid intermediate II). The polypeptide is UDP-N-acetylglucosamine--N-acetylmuramyl-(pentapeptide) pyrophosphoryl-undecaprenol N-acetylglucosamine transferase (Streptococcus equi subsp. zooepidemicus (strain H70)).